Reading from the N-terminus, the 151-residue chain is 3-dehydroquinate dehydratase (151 aa).

The Proton acceptor role is filled by Tyr26. The substrate site is built by Asn75, His81, and Asp88. His101 serves as the catalytic Proton donor. Substrate is bound by residues 102–103 and Arg112; that span reads LS.

The protein belongs to the type-II 3-dehydroquinase family. As to quaternary structure, homododecamer.

The catalysed reaction is 3-dehydroquinate = 3-dehydroshikimate + H2O. Its pathway is metabolic intermediate biosynthesis; chorismate biosynthesis; chorismate from D-erythrose 4-phosphate and phosphoenolpyruvate: step 3/7. Its function is as follows. Catalyzes a trans-dehydration via an enolate intermediate. This chain is 3-dehydroquinate dehydratase, found in Shewanella sediminis (strain HAW-EB3).